A 397-amino-acid chain; its full sequence is 4-hydroxyphenylpyruvate dioxygenase (397 aa).

2 consecutive VOC domains span residues 18–149 and 181–339; these read NFHH…FVEY and FIDH…IFTK. Fe cation contacts are provided by His184, His267, and Glu350.

The protein belongs to the 4HPPD family. Homodimer. The cofactor is Fe cation.

Its subcellular location is the cytoplasm. The protein localises to the endoplasmic reticulum membrane. It is found in the golgi apparatus membrane. It carries out the reaction 3-(4-hydroxyphenyl)pyruvate + O2 = homogentisate + CO2. It functions in the pathway amino-acid degradation; L-phenylalanine degradation; acetoacetate and fumarate from L-phenylalanine: step 3/6. Catalyzes the conversion of 4-hydroxyphenylpyruvic acid to homogentisic acid, one of the steps in tyrosine catabolism. This is 4-hydroxyphenylpyruvate dioxygenase (hpd) from Danio rerio (Zebrafish).